A 1115-amino-acid chain; its full sequence is Neural cell adhesion molecule 1 (1115 aa).

Residues 1-19 (MLRTKDLIWTLFFLGTAVS) form the signal peptide. Ig-like C2-type domains are found at residues 20–111 (LQVD…ATVN), 116–205 (QKLM…KDIQ), 212–302 (PTVQ…ASIH), 309–402 (PKIT…MYLE), and 407–492 (PKLQ…ESLE). Residues 20 to 711 (LQVDIVPSQG…NGSPTAGLST (692 aa)) are Extracellular-facing. Disulfide bonds link cysteine 41/cysteine 96 and cysteine 139/cysteine 189. Residues 152–156 (KHKGR) and 161–165 (KKDVR) contribute to the heparin site. An N-linked (GlcNAc...) asparagine; partial glycan is attached at asparagine 222. Cysteines 235 and 288 form a disulfide. 5 N-linked (GlcNAc...) asparagine glycosylation sites follow: asparagine 316, asparagine 348, asparagine 424, asparagine 450, and asparagine 479. Residues cysteine 330 and cysteine 386 are joined by a disulfide bond. Residues cysteine 427 and cysteine 480 are joined by a disulfide bond. 2 consecutive Fibronectin type-III domains span residues 500-599 (TPSS…TQPV) and 601-696 (EPSA…SAQP). The GPI-anchor amidated serine moiety is linked to residue threonine 706. The helical transmembrane segment at 712 to 729 (GAIVGILIVIFVLLLVVM) threads the bilayer. The Cytoplasmic segment spans residues 730-1115 (DITCYFLNKC…TQTKENESKA (386 aa)). Disordered regions lie at residues 756–809 (GAKG…TEPE), 839–912 (FATA…SASN), and 924–1115 (VLSP…ESKA). Over residues 758–799 (KGKDMEEGKAAFSKDESKEPIVEVRTEEERTPNHDGGKHTEP) the composition is skewed to basic and acidic residues. 2 positions are modified to phosphoserine: serine 770 and serine 774. 3 stretches are compositionally biased toward low complexity: residues 800–809 (NETTPLTEPE), 845–856 (SPTSETTTLTSS), and 876–896 (TPSKGVTASSSSPASAPKVAP). Phosphoserine is present on residues serine 887 and serine 890. 2 stretches are compositionally biased toward polar residues: residues 902–912 (DTPTSAPSASN) and 926–935 (SPSTPASAGE). At serine 926 the chain carries Phosphoserine. Threonine 929 is subject to Phosphothreonine. 2 stretches are compositionally biased toward low complexity: residues 936–974 (TSKAPPASKASPAPTPTPAGAASPLAAVAAPATDAPQAK) and 999–1012 (AATAPASPKSKAAT). Residues serine 946 and serine 958 each carry the phosphoserine modification. Threonine 1001 carries the post-translational modification Phosphothreonine. Serine 1005 carries the phosphoserine modification. 2 stretches are compositionally biased toward basic and acidic residues: residues 1019–1037 (EDLKMDEGNFKTPDIDLAK) and 1074–1091 (KTEKGPVETKSEPPESEA). Position 1030 is a phosphothreonine (threonine 1030).

In terms of assembly, interacts with MDK. Found in a complex with SLC39A6, SLC39A10 and with NCAM1; this complex controls NCAM1 phosphorylation and integration into focal adhesion complexes during epithelial-tomesenchymal transition. Interacts with synaptic plasticity regulator PANTS. In terms of processing, polysialylated by ST8SIA2 and ST8SIA4. Polysialylation modulates cell interactions by confering both attractive and repulsive properties that are highly regulated by ST8SIA2 and ST8SIA4. Polysialylation is formed on a-2,3-linked sialic acid of core glycans.

The protein resides in the cell membrane. This protein is a cell adhesion molecule involved in neuron-neuron adhesion, neurite fasciculation, outgrowth of neurites, etc. This is Neural cell adhesion molecule 1 from Mus musculus (Mouse).